The primary structure comprises 304 residues: Aspartate carbamoyltransferase catalytic subunit (304 aa).

Residues Arg53 and Thr54 each coordinate carbamoyl phosphate. An L-aspartate-binding site is contributed by Lys82. The carbamoyl phosphate site is built by Arg103, His131, and Gln134. L-aspartate-binding residues include Arg163 and Arg224. The carbamoyl phosphate site is built by Leu263 and Pro264.

The protein belongs to the aspartate/ornithine carbamoyltransferase superfamily. ATCase family. In terms of assembly, heterooligomer of catalytic and regulatory chains.

It catalyses the reaction carbamoyl phosphate + L-aspartate = N-carbamoyl-L-aspartate + phosphate + H(+). The protein operates within pyrimidine metabolism; UMP biosynthesis via de novo pathway; (S)-dihydroorotate from bicarbonate: step 2/3. Catalyzes the condensation of carbamoyl phosphate and aspartate to form carbamoyl aspartate and inorganic phosphate, the committed step in the de novo pyrimidine nucleotide biosynthesis pathway. This chain is Aspartate carbamoyltransferase catalytic subunit, found in Haloarcula marismortui (strain ATCC 43049 / DSM 3752 / JCM 8966 / VKM B-1809) (Halobacterium marismortui).